Consider the following 1500-residue polypeptide: Synaptonemal complex protein 2 (1500 aa).

Residues serine 457 and serine 458 each carry the phosphoserine modification. Threonine 464 carries the phosphothreonine modification. The residue at position 487 (serine 487) is a Phosphoserine. Threonine 496 bears the Phosphothreonine mark. Serine 500, serine 509, serine 518, and serine 527 each carry phosphoserine. Residues 512 to 548 (KAVSKTSESGMDYAASPKSRQSDGRKRWNNRANHNKT) are disordered. A phosphothreonine mark is found at threonine 608 and threonine 633. Residues serine 646, serine 650, and serine 741 each carry the phosphoserine modification. The disordered stretch occupies residues 796 to 820 (NPSDSMMSTRKLKEPQDGSGFSKKP). At serine 914 the chain carries Phosphoserine. Position 916 is a phosphothreonine (threonine 916). Disordered stretches follow at residues 940 to 1010 (LMDY…TSES) and 1029 to 1084 (KEET…SASV). A compositionally biased stretch (basic residues) spans 948–958 (NTTKYKSRKSR). The span at 977 to 989 (MKNDYEVVVDGRT) shows a compositional bias: basic and acidic residues. The span at 990–1000 (RLPRRATKTKK) shows a compositional bias: basic residues. The segment covering 1059–1076 (PSEEQKNSSRLREGREDS) has biased composition (basic and acidic residues). Residues serine 1115, serine 1117, serine 1124, serine 1133, serine 1140, serine 1144, serine 1156, serine 1159, and serine 1164 each carry the phosphoserine modification. At threonine 1168 the chain carries Phosphothreonine. Residues serine 1183, serine 1213, and serine 1216 each carry the phosphoserine modification. A disordered region spans residues 1208–1234 (YMEPESPESCDNHMQNKREGNHAASPL). Residues 1217–1228 (CDNHMQNKREGN) show a composition bias toward basic and acidic residues. 3 positions are modified to phosphoserine: serine 1232, serine 1275, and serine 1277. A Phosphothreonine modification is found at threonine 1313. Residues 1388–1429 (LLDELEKVEKDSQTLRDLEKELVDIEEKLVQKMRAYHRCERE) adopt a coiled-coil conformation.

Belongs to the SYCP2 family. In terms of assembly, component of the lateral elements of synaptonemal complexes. Heterodimer with SYCP3. Interacts with SMC1A and SMC3. Interacts with TEX11. Phosphorylated. In terms of tissue distribution, detected in testis and spermatocytes (at protein level).

The protein localises to the nucleus. It localises to the chromosome. In terms of biological role, major component of the axial/lateral elements of synaptonemal complexes (SCS) during meiotic prophase. Plays a role in the assembly of synaptonemal complexes. Required for normal meiotic chromosome synapsis during oocyte and spermatocyte development and for normal male and female fertility. Required for insertion of SYCP3 into synaptonemal complexes. May be involved in the organization of chromatin by temporarily binding to DNA scaffold attachment regions. Requires SYCP3, but not SYCP1, in order to be incorporated into the axial/lateral elements. In Mus musculus (Mouse), this protein is Synaptonemal complex protein 2 (Sycp2).